A 248-amino-acid chain; its full sequence is UDP-2,3-diacylglucosamine hydrolase (248 aa).

Mn(2+) is bound by residues Asp-7, His-9, Asp-40, Asn-78, and His-113. 78–79 contributes to the substrate binding site; that stretch reads NR. 5 residues coordinate substrate: Asp-121, Ser-159, Thr-163, Lys-166, and His-194. 2 residues coordinate Mn(2+): His-194 and His-196.

The protein belongs to the LpxH family. Mn(2+) serves as cofactor.

The protein resides in the cell inner membrane. It catalyses the reaction UDP-2-N,3-O-bis[(3R)-3-hydroxytetradecanoyl]-alpha-D-glucosamine + H2O = 2-N,3-O-bis[(3R)-3-hydroxytetradecanoyl]-alpha-D-glucosaminyl 1-phosphate + UMP + 2 H(+). The protein operates within glycolipid biosynthesis; lipid IV(A) biosynthesis; lipid IV(A) from (3R)-3-hydroxytetradecanoyl-[acyl-carrier-protein] and UDP-N-acetyl-alpha-D-glucosamine: step 4/6. In terms of biological role, hydrolyzes the pyrophosphate bond of UDP-2,3-diacylglucosamine to yield 2,3-diacylglucosamine 1-phosphate (lipid X) and UMP by catalyzing the attack of water at the alpha-P atom. Involved in the biosynthesis of lipid A, a phosphorylated glycolipid that anchors the lipopolysaccharide to the outer membrane of the cell. In Pseudomonas syringae pv. syringae (strain B728a), this protein is UDP-2,3-diacylglucosamine hydrolase.